The sequence spans 222 residues: Probable GTP-binding protein EngB (222 aa).

Positions 27-202 (TGIEVAFAGR…AKKLDEWFLG (176 aa)) constitute an EngB-type G domain. GTP is bound by residues 35–42 (GRSNAGKS), 61–65 (GRTQL), 81–84 (DLPG), 148–151 (TKAD), and 181–183 (FSS). Mg(2+)-binding residues include S42 and T63.

This sequence belongs to the TRAFAC class TrmE-Era-EngA-EngB-Septin-like GTPase superfamily. EngB GTPase family. Requires Mg(2+) as cofactor.

Necessary for normal cell division and for the maintenance of normal septation. In Pseudoalteromonas translucida (strain TAC 125), this protein is Probable GTP-binding protein EngB.